A 557-amino-acid chain; its full sequence is NADH-quinone oxidoreductase subunit C/D (557 aa).

Acidic residues predominate over residues 1-13; the sequence is MSLEEQQSDDPAE. Residues 1-20 form a disordered region; the sequence is MSLEEQQSDDPAELESGVSR. Residues 1 to 174 are NADH dehydrogenase I subunit C; it reads MSLEEQQSDD…ATLREHANPL (174 aa). Residues 184-557 are NADH dehydrogenase I subunit D; it reads NTMYINIGPH…LDIVLGEVDR (374 aa). K517 participates in a covalent cross-link: Glycyl lysine isopeptide (Lys-Gly) (interchain with G-Cter in SAMP2).

The protein in the N-terminal section; belongs to the complex I 30 kDa subunit family. This sequence in the C-terminal section; belongs to the complex I 49 kDa subunit family. NDH-1 is composed of 13 different subunits. Subunits NuoB, CD, E, F, and G constitute the peripheral sector of the complex.

The protein localises to the cell membrane. The enzyme catalyses a quinone + NADH + 5 H(+)(in) = a quinol + NAD(+) + 4 H(+)(out). Functionally, NDH-1 shuttles electrons from NADH, via FMN and iron-sulfur (Fe-S) centers, to quinones in the respiratory chain. Couples the redox reaction to proton translocation (for every two electrons transferred, four hydrogen ions are translocated across the cytoplasmic membrane), and thus conserves the redox energy in a proton gradient. The sequence is that of NADH-quinone oxidoreductase subunit C/D (nuoCD) from Haloferax volcanii (strain ATCC 29605 / DSM 3757 / JCM 8879 / NBRC 14742 / NCIMB 2012 / VKM B-1768 / DS2) (Halobacterium volcanii).